The chain runs to 156 residues: Cell division protein SepF (156 aa).

Positions 30–49 are disordered; the sequence is NAAAPSTTETSVVRQDDRPK.

Belongs to the SepF family. Homodimer. Interacts with FtsZ.

It localises to the cytoplasm. Cell division protein that is part of the divisome complex and is recruited early to the Z-ring. Probably stimulates Z-ring formation, perhaps through the cross-linking of FtsZ protofilaments. Its function overlaps with FtsA. The sequence is that of Cell division protein SepF from Exiguobacterium sp. (strain ATCC BAA-1283 / AT1b).